Consider the following 266-residue polypeptide: 5'-nucleotidase SurE (266 aa).

Residues aspartate 8, aspartate 9, serine 40, and asparagine 98 each coordinate a divalent metal cation.

This sequence belongs to the SurE nucleotidase family. A divalent metal cation is required as a cofactor.

The protein localises to the cytoplasm. It carries out the reaction a ribonucleoside 5'-phosphate + H2O = a ribonucleoside + phosphate. Nucleotidase that shows phosphatase activity on nucleoside 5'-monophosphates. The protein is 5'-nucleotidase SurE of Parasynechococcus marenigrum (strain WH8102).